Here is a 473-residue protein sequence, read N- to C-terminus: Serine incorporator 3 (473 aa).

Topologically, residues 1-96 are extracellular; sequence MGAVLGVFSL…KDCDVLVGYK (96 aa). An N-linked (GlcNAc...) asparagine glycan is attached at N34. A helical transmembrane segment spans residues 97–117; sequence AVYRISFAMAIFFFVFSLLMF. Topologically, residues 118 to 132 are cytoplasmic; the sequence is KVKTSKDLRAAVHNG. The chain crosses the membrane as a helical span at residues 133 to 153; the sequence is FWFFKIAALIGIMVGSFYIPG. At 154–159 the chain is on the extracellular side; the sequence is GYFSSV. Residues 160-180 traverse the membrane as a helical segment; that stretch reads WFVVGMIGAALFILIQLVLLV. At 181–203 the chain is on the cytoplasmic side; that stretch reads DFAHSWNESWVNRMEEGNPRLWY. The chain crosses the membrane as a helical span at residues 204 to 224; that stretch reads AALLSFTSAFYILSIICVGLL. Over 225–239 the chain is Extracellular; it reads YTYYTKPDGCTENKF. The chain crosses the membrane as a helical span at residues 240–260; that stretch reads FISINLILCVVASIISIHPKI. Over 261–329 the chain is Cytoplasmic; it reads QEHQPRSGLL…VPTPTPPSKS (69 aa). The helical transmembrane segment at 330–350 threads the bilayer; sequence GSLLDSDNFIGLFVFVLCLLY. Topologically, residues 351–406 are extracellular; the sequence is SSIRTSTNSQVDKLTLSGSDSVILGDTTTSGASDEEDGQPRRAVDNEKEGVQYSYS. The residue at position 371 (S371) is a Phosphoserine. Residues 407 to 427 traverse the membrane as a helical segment; that stretch reads LFHLMLCLASLYIMMTLTSWY. Over 428 to 446 the chain is Cytoplasmic; that stretch reads SPDAKFQSMTSKWPAVWVK. A helical transmembrane segment spans residues 447-467; the sequence is ISSSWVCLLLYVWTLVAPLVL. Over 468-473 the chain is Extracellular; that stretch reads TSRDFS.

Belongs to the TDE1 family. In terms of processing, N-glycosylated. Ubiquitous. Expression levels were increased fourfold to tenfold in lung tumor tissues compared with normal pulmonary tissues.

The protein resides in the cell membrane. The protein localises to the golgi apparatus membrane. It localises to the cytoplasm. It is found in the perinuclear region. The enzyme catalyses a 1,2-diacyl-sn-glycero-3-phospho-L-serine(in) = a 1,2-diacyl-sn-glycero-3-phospho-L-serine(out). The catalysed reaction is a 1,2-diacyl-sn-glycero-3-phosphocholine(in) = a 1,2-diacyl-sn-glycero-3-phosphocholine(out). It catalyses the reaction a 1,2-diacyl-sn-glycero-3-phosphoethanolamine(in) = a 1,2-diacyl-sn-glycero-3-phosphoethanolamine(out). Its function is as follows. Restriction factor required to restrict infectivity of lentiviruses, such as HIV-1: acts by inhibiting an early step of viral infection. Impairs the penetration of the viral particle into the cytoplasm. Non-ATP-dependent, non-specific lipid transporter for phosphatidylserine, phosphatidylcholine, and phosphatidylethanolamine. Functions as a scramblase that flips lipids in both directions across the membrane. Phospholipid scrambling results in HIV-1 surface exposure of phosphatidylserine and loss of membrane asymmetry, which leads to changes in HIV-1 Env conformation and loss of infectivity. This Homo sapiens (Human) protein is Serine incorporator 3.